A 246-amino-acid polypeptide reads, in one-letter code: Large ribosomal subunit protein uL30 (246 aa).

M1 is subject to N-acetylmethionine. Repeat copies occupy residues 7 to 17 (KKVPSVPESLL), 18 to 28 (KRRQAYAAAKA), 29 to 40 (KRLKRLLAQKKF), and 41 to 52 (RKAQRKIIYERA). A 4 X 12 AA tandem repeats region spans residues 7 to 52 (KKVPSVPESLLKRRQAYAAAKAKRLKRLLAQKKFRKAQRKIIYERA).

The protein belongs to the universal ribosomal protein uL30 family. In terms of assembly, component of the large ribosomal subunit.

It is found in the cytoplasm. In terms of biological role, component of the large ribosomal subunit. The ribosome is a large ribonucleoprotein complex responsible for the synthesis of proteins in the cell. Binds to G-rich structures in 28S rRNA and in mRNAs. Plays a regulatory role in the translation apparatus; inhibits cell-free translation of mRNAs. The polypeptide is Large ribosomal subunit protein uL30 (RPL7) (Gallus gallus (Chicken)).